A 274-amino-acid polypeptide reads, in one-letter code: Cytochrome b-c1 complex subunit Rieske, mitochondrial (274 aa).

Residues 79–103 (SHTDVKVPDFSEYRRLEVLDSTKSS) lie on the Mitochondrial matrix side of the membrane. The chain crosses the membrane as a helical span at residues 104–140 (RESSEARKGFSYLVTGVTTVGVAYAAKNAVTQFVSSM). The Mitochondrial intermembrane portion of the chain corresponds to 141-274 (SASADVLALA…FTSDDMVIVG (134 aa)). The region spanning 187 to 272 (EAAVELSQLR…YEFTSDDMVI (86 aa)) is the Rieske domain. Residues Cys-217, His-219, Cys-236, His-239, and Ser-241 each coordinate [2Fe-2S] cluster. An intrachain disulfide couples Cys-222 to Cys-238.

Belongs to the Rieske iron-sulfur protein family. In terms of assembly, component of the ubiquinol-cytochrome c oxidoreductase (cytochrome b-c1 complex, complex III, CIII), a multisubunit enzyme composed of 11 subunits. The complex is composed of 3 respiratory subunits cytochrome b, cytochrome c1 and Rieske protein UQCRFS1, 2 core protein subunits UQCRC1/QCR1 and UQCRC2/QCR2, and 6 low-molecular weight protein subunits UQCRH/QCR6, UQCRB/QCR7, UQCRQ/QCR8, UQCR10/QCR9, UQCR11/QCR10 and subunit 9, the cleavage product of Rieske protein UQCRFS1. The complex exists as an obligatory dimer and forms supercomplexes (SCs) in the inner mitochondrial membrane with NADH-ubiquinone oxidoreductase (complex I, CI) and cytochrome c oxidase (complex IV, CIV), resulting in different assemblies (supercomplex SCI(1)III(2)IV(1) and megacomplex MCI(2)III(2)IV(2)). Incorporation of the Rieske protein UQCRFS1 is the penultimate step in complex III assembly. Interacts with TTC19, which is involved in the clearance of UQCRFS1 fragments. As to quaternary structure, component of the ubiquinol-cytochrome c oxidoreductase (cytochrome b-c1 complex, complex III, CIII). Subunit 9 corresponds to the mitochondrial targeting sequence (MTS) of Rieske protein UQCRFS1. It is retained after processing and incorporated inside complex III, where it remains bound to the complex and localizes between the 2 core subunits UQCRC1/QCR1 and UQCRC2/QCR2. It depends on [2Fe-2S] cluster as a cofactor. Post-translationally, proteolytic processing is necessary for the correct insertion of UQCRFS1 in the complex III dimer. Several fragments are generated during UQCRFS1 insertion, most probably due to the endogenous matrix-processing peptidase (MPP) activity of the 2 core protein subunits UQCRC1/QCR1 and UQCRC2/QCR2, which are homologous to the 2 mitochondrial-processing peptidase (MPP) subunits beta-MPP and alpha-MPP respectively. The action of the protease is also necessary for the clearance of the UQCRFS1 fragments.

It is found in the mitochondrion inner membrane. The enzyme catalyses a quinol + 2 Fe(III)-[cytochrome c](out) = a quinone + 2 Fe(II)-[cytochrome c](out) + 2 H(+)(out). In terms of biological role, component of the ubiquinol-cytochrome c oxidoreductase, a multisubunit transmembrane complex that is part of the mitochondrial electron transport chain which drives oxidative phosphorylation. The respiratory chain contains 3 multisubunit complexes succinate dehydrogenase (complex II, CII), ubiquinol-cytochrome c oxidoreductase (cytochrome b-c1 complex, complex III, CIII) and cytochrome c oxidase (complex IV, CIV), that cooperate to transfer electrons derived from NADH and succinate to molecular oxygen, creating an electrochemical gradient over the inner membrane that drives transmembrane transport and the ATP synthase. The cytochrome b-c1 complex catalyzes electron transfer from ubiquinol to cytochrome c, linking this redox reaction to translocation of protons across the mitochondrial inner membrane, with protons being carried across the membrane as hydrogens on the quinol. In the process called Q cycle, 2 protons are consumed from the matrix, 4 protons are released into the intermembrane space and 2 electrons are passed to cytochrome c. The Rieske protein is a catalytic core subunit containing a [2Fe-2S] iron-sulfur cluster. It cycles between 2 conformational states during catalysis to transfer electrons from the quinol bound in the Q(0) site in cytochrome b to cytochrome c1. Incorporation of UQCRFS1 is the penultimate step in complex III assembly. Its function is as follows. Component of the ubiquinol-cytochrome c oxidoreductase (cytochrome b-c1 complex, complex III, CIII). UQCRFS1 undergoes proteolytic processing once it is incorporated in the complex III dimer. One of the fragments, called subunit 9, corresponds to its mitochondrial targeting sequence (MTS). The proteolytic processing is necessary for the correct insertion of UQCRFS1 in the complex III dimer, but the persistence of UQCRFS1-derived fragments may prevent newly imported UQCRFS1 to be processed and assembled into complex III and is detrimental for the complex III structure and function. The polypeptide is Cytochrome b-c1 complex subunit Rieske, mitochondrial (UQCRFS1) (Pan paniscus (Pygmy chimpanzee)).